The following is a 265-amino-acid chain: Capsule polysaccharide export inner-membrane protein CtrC (265 aa).

The next 6 helical transmembrane spans lie at 37-57, 67-84, 121-141, 148-168, 178-198, and 238-258; these read IGFL…VLMW, TLNI…LMMW, IAGA…IGWI, FYML…GLVI, FGKI…AFFF, and WYIV…VSKF. One can recognise an ABC transmembrane type-2 domain in the interval 37–258; it reads IGFLWLFVEP…LFGLAMVSKF (222 aa).

It belongs to the ABC-2 integral membrane protein family.

The protein localises to the cell inner membrane. May form an ATP-driven capsule polysaccharide export apparatus, in association with the CtrB and CtrD proteins. The protein is Capsule polysaccharide export inner-membrane protein CtrC (ctrC) of Neisseria meningitidis serogroup B (strain ATCC BAA-335 / MC58).